The following is a 1165-amino-acid chain: Error-prone DNA polymerase (1165 aa).

A disordered region spans residues 1111–1165; the sequence is SEGLARPPLPTGADLYEPLTYEPLNGDRRDNPDAPAQRLRHPRDVRILPPSRDFH. The span at 1152 to 1165 shows a compositional bias: basic and acidic residues; that stretch reads PRDVRILPPSRDFH.

This sequence belongs to the DNA polymerase type-C family. DnaE2 subfamily.

The protein localises to the cytoplasm. It catalyses the reaction DNA(n) + a 2'-deoxyribonucleoside 5'-triphosphate = DNA(n+1) + diphosphate. Its function is as follows. DNA polymerase involved in damage-induced mutagenesis and translesion synthesis (TLS). It is not the major replicative DNA polymerase. The protein is Error-prone DNA polymerase of Rhodopseudomonas palustris (strain HaA2).